The following is a 682-amino-acid chain: Actin-binding LIM protein 3 (682 aa).

Methionine 1 bears the N-acetylmethionine mark. LIM zinc-binding domains are found at residues 21–80 (IQCY…LYGT), 80–140 (TRCD…MTSS), 149–208 (SHCA…QFGI), and 208–268 (IKCE…ARAE). Residues serine 277, serine 280, serine 282, serine 286, serine 290, serine 337, serine 372, and serine 373 each carry the phosphoserine modification. Disordered stretches follow at residues 372–426 (SSPG…SYQA) and 440–475 (YRKP…PAYS). Tyrosine 376 is subject to Phosphotyrosine. Serine 379 and serine 388 each carry phosphoserine. Composition is skewed to polar residues over residues 380–393 (PTYS…TFSR), 405–425 (GRSS…TSYQ), and 453–466 (STAT…DISQ). 3 positions are modified to phosphoserine: serine 492, serine 502, and serine 503. Residue threonine 542 is modified to Phosphothreonine. Phosphoserine occurs at positions 566, 575, and 606. The HP domain occupies 614 to 682 (MREYKIYPYE…NELKKQARLF (69 aa)). Arginine 630 is modified (omega-N-methylarginine).

As to quaternary structure, directly interacts with F-actin and ABRA. In terms of tissue distribution, expressed in heart, brain, lung and liver. In the brain, highly expressed in the olfactory bulb. In the hippocampus, expressed selectively in the CA2 and CA3 fields. In the cerebellum, expressed in internal granular cells.

It localises to the cytoplasm. In terms of biological role, may act as scaffold protein. May stimulate ABRA activity and ABRA-dependent SRF transcriptional activity. The chain is Actin-binding LIM protein 3 (Ablim3) from Mus musculus (Mouse).